Consider the following 284-residue polypeptide: Bifunctional protein FolD (284 aa).

Residues 164 to 166 (GRS) and Ser189 contribute to the NADP(+) site.

Belongs to the tetrahydrofolate dehydrogenase/cyclohydrolase family. Homodimer.

The catalysed reaction is (6R)-5,10-methylene-5,6,7,8-tetrahydrofolate + NADP(+) = (6R)-5,10-methenyltetrahydrofolate + NADPH. It carries out the reaction (6R)-5,10-methenyltetrahydrofolate + H2O = (6R)-10-formyltetrahydrofolate + H(+). It participates in one-carbon metabolism; tetrahydrofolate interconversion. Its function is as follows. Catalyzes the oxidation of 5,10-methylenetetrahydrofolate to 5,10-methenyltetrahydrofolate and then the hydrolysis of 5,10-methenyltetrahydrofolate to 10-formyltetrahydrofolate. This chain is Bifunctional protein FolD, found in Listeria monocytogenes serotype 4a (strain HCC23).